A 188-amino-acid chain; its full sequence is Epididymal-specific lipocalin-5 (188 aa).

The first 19 residues, 1-19, serve as a signal peptide directing secretion; sequence MENIMPFALLGLCVGLAAG. An intrachain disulfide couples C82 to C176.

It belongs to the calycin superfamily. Lipocalin family. There are two similar, immunologically cross-reacting forms of this protein, designated B and C, which probably result from different processing of the amino end. In terms of processing, the N-terminus of form C is probably blocked. In terms of tissue distribution, synthesized exclusively in the proximal part (caput epididymidis) of the epididymis. It makes up a substantial part of the total protein in the epididymal luminal fluid and binds to the sperm membrane.

It is found in the secreted. Its function is as follows. Associates with spermatozoa in the epididymal fluid but does not bind tightly to them. Binds both all-trans and 9-cis retinoic acid. May act as a retinoid carrier protein which is required for epididymal function and/or sperm maturation. In Rattus norvegicus (Rat), this protein is Epididymal-specific lipocalin-5 (Lcn5).